The following is a 358-amino-acid chain: Protein RecA (358 aa).

ATP is bound at residue 69-76; it reads GPESSGKT.

This sequence belongs to the RecA family.

The protein localises to the cytoplasm. Its function is as follows. Can catalyze the hydrolysis of ATP in the presence of single-stranded DNA, the ATP-dependent uptake of single-stranded DNA by duplex DNA, and the ATP-dependent hybridization of homologous single-stranded DNAs. It interacts with LexA causing its activation and leading to its autocatalytic cleavage. This chain is Protein RecA, found in Trichormus variabilis (strain ATCC 29413 / PCC 7937) (Anabaena variabilis).